Reading from the N-terminus, the 237-residue chain is Ribosomal RNA small subunit methyltransferase G (237 aa).

S-adenosyl-L-methionine is bound by residues Gly-78, Phe-83, 129–130 (AE), and Arg-146.

The protein belongs to the methyltransferase superfamily. RNA methyltransferase RsmG family.

The protein localises to the cytoplasm. Its function is as follows. Specifically methylates the N7 position of a guanine in 16S rRNA. The polypeptide is Ribosomal RNA small subunit methyltransferase G (Mesoplasma florum (strain ATCC 33453 / NBRC 100688 / NCTC 11704 / L1) (Acholeplasma florum)).